The following is a 390-amino-acid chain: NADH-quinone oxidoreductase subunit D (390 aa).

This sequence belongs to the complex I 49 kDa subunit family. NDH-1 is composed of 14 different subunits. Subunits NuoB, C, D, E, F, and G constitute the peripheral sector of the complex.

It localises to the cell inner membrane. It catalyses the reaction a quinone + NADH + 5 H(+)(in) = a quinol + NAD(+) + 4 H(+)(out). Functionally, NDH-1 shuttles electrons from NADH, via FMN and iron-sulfur (Fe-S) centers, to quinones in the respiratory chain. The immediate electron acceptor for the enzyme in this species is believed to be ubiquinone. Couples the redox reaction to proton translocation (for every two electrons transferred, four hydrogen ions are translocated across the cytoplasmic membrane), and thus conserves the redox energy in a proton gradient. The polypeptide is NADH-quinone oxidoreductase subunit D (Trichlorobacter lovleyi (strain ATCC BAA-1151 / DSM 17278 / SZ) (Geobacter lovleyi)).